A 177-amino-acid polypeptide reads, in one-letter code: Nucleoside triphosphate/diphosphate phosphatase (177 aa).

Residue arginine 23 is the Proton donor of the active site. Mg(2+) contacts are provided by asparagine 87, aspartate 103, aspartate 105, aspartate 107, aspartate 120, and glutamate 123.

It belongs to the Ntdp family. Requires Mg(2+) as cofactor.

The catalysed reaction is a ribonucleoside 5'-triphosphate + H2O = a ribonucleoside 5'-diphosphate + phosphate + H(+). It carries out the reaction a ribonucleoside 5'-diphosphate + H2O = a ribonucleoside 5'-phosphate + phosphate + H(+). Functionally, has nucleoside phosphatase activity towards nucleoside triphosphates and nucleoside diphosphates. The polypeptide is Nucleoside triphosphate/diphosphate phosphatase (Streptococcus thermophilus (strain ATCC BAA-491 / LMD-9)).